We begin with the raw amino-acid sequence, 411 residues long: MDAIILCAGKGTRLHPITESRPKPMIPIAGKPIIEHIIEKIENHVEKIYLIVGYQKEKIIDYFKDNPKIEYILQEKQLGTGHAVLTAKNFIKGDFLVLNGDVIFEDSIDEILNYENAVSLSNVDNPENFGVIELGYDNKIINLLEKPKKEEITSNLINAGIYKLQNSVFGILENLAPSERGEIELTDALKKLIENGKLHGVELKGYWNDIGHPWDVLSANNHFLNKIISKVSGKIENTVSITGNVIIEEGAVIKPNSVIEGPAIIKSGSIVGPLAYVRPNTVLMKNTFVGNSSEIKGSIIFENTKIPHLSYVGDSIIGANCNFGCNTITANLRFDDKPVIVNIKGKPVKSVRKLGAIIGDCVKTGIQVSFMPGVKIGSNSLIGANCLIDRDIEQESFVYKKDELVITKKRN.

Positions 1–204 are pyrophosphorylase; the sequence is MDAIILCAGK…NGKLHGVELK (204 aa). Residues 6–9, Gln-74, and Gly-79 contribute to the UTP site; that span reads LCAG. N-acetyl-alpha-D-glucosamine 1-phosphate is bound by residues Thr-80, Gly-130, Asn-142, and Asn-158. The interval 205-224 is linker; the sequence is GYWNDIGHPWDVLSANNHFL. Residues 225-411 form an N-acetyltransferase region; that stretch reads NKIISKVSGK…DELVITKKRN (187 aa). His-308 functions as the Proton acceptor in the catalytic mechanism. Acetyl-CoA is bound by residues Ala-384 and Lys-401.

The protein in the N-terminal section; belongs to the N-acetylglucosamine-1-phosphate uridyltransferase family. This sequence in the C-terminal section; belongs to the transferase hexapeptide repeat family.

It catalyses the reaction N-acetyl-alpha-D-glucosamine 1-phosphate + UTP + H(+) = UDP-N-acetyl-alpha-D-glucosamine + diphosphate. The catalysed reaction is alpha-D-glucosamine 1-phosphate + acetyl-CoA = N-acetyl-alpha-D-glucosamine 1-phosphate + CoA + H(+). It functions in the pathway nucleotide-sugar biosynthesis; UDP-N-acetyl-alpha-D-glucosamine biosynthesis; N-acetyl-alpha-D-glucosamine 1-phosphate from alpha-D-glucosamine 6-phosphate (route II): step 2/2. The protein operates within nucleotide-sugar biosynthesis; UDP-N-acetyl-alpha-D-glucosamine biosynthesis; UDP-N-acetyl-alpha-D-glucosamine from N-acetyl-alpha-D-glucosamine 1-phosphate: step 1/1. Its function is as follows. Catalyzes the last two sequential reactions in the de novo biosynthetic pathway for UDP-N-acetyl-glucosamine (UDP-GlcNAc). Responsible for the acetylation of GlcN-1-P to GlcNAc-1-P, and for the uridyl transfer from UTP to GlcNAc-1-P, to produce UDP-GlcNAc and pyrophosphate. This chain is Bifunctional protein GlmU, found in Methanococcus maripaludis (strain DSM 14266 / JCM 13030 / NBRC 101832 / S2 / LL).